The chain runs to 43 residues: Holotricin-1 (43 aa).

3 disulfides stabilise this stretch: Cys3/Cys34, Cys20/Cys39, and Cys24/Cys41.

This sequence belongs to the invertebrate defensin family. Type 1 subfamily. As to expression, hemolymph.

It is found in the secreted. Functionally, shows potent antibacterial activity against Gram-positive bacteria. The sequence is that of Holotricin-1 from Holotrichia diomphalia (Korean black chafer).